We begin with the raw amino-acid sequence, 103 residues long: NADH-quinone oxidoreductase subunit K (103 aa).

The next 3 helical transmembrane spans lie at leucine 6 to leucine 26, isoleucine 32 to phenylalanine 52, and valine 63 to leucine 83.

It belongs to the complex I subunit 4L family. In terms of assembly, NDH-1 is composed of 14 different subunits. Subunits NuoA, H, J, K, L, M, N constitute the membrane sector of the complex.

The protein localises to the cell inner membrane. It carries out the reaction a quinone + NADH + 5 H(+)(in) = a quinol + NAD(+) + 4 H(+)(out). Functionally, NDH-1 shuttles electrons from NADH, via FMN and iron-sulfur (Fe-S) centers, to quinones in the respiratory chain. The immediate electron acceptor for the enzyme in this species is believed to be ubiquinone. Couples the redox reaction to proton translocation (for every two electrons transferred, four hydrogen ions are translocated across the cytoplasmic membrane), and thus conserves the redox energy in a proton gradient. This chain is NADH-quinone oxidoreductase subunit K, found in Ralstonia pickettii (strain 12D).